The primary structure comprises 231 residues: uncharacterized protein (231 aa).

A signal peptide spans 1-25; sequence MAKWVPALLLRRVPLFSLRFRPASS. Residues 26-200 are Extracellular-facing; the sequence is TFLPVLAATE…SRPSPSATLT (175 aa). Residues 39-64 form a disordered region; that stretch reads SVPSGDLSMPVKTRAEGEDDGFGEAG. Residues 201-225 form a helical membrane-spanning segment; that stretch reads LLLASSCLLAPAPPSFILLLFTLIA. Over 226–231 the chain is Cytoplasmic; it reads PDLPHS.

Its subcellular location is the membrane. This is an uncharacterized protein from Homo sapiens (Human).